Here is a 142-residue protein sequence, read N- to C-terminus: Large ribosomal subunit protein uL13 (142 aa).

It belongs to the universal ribosomal protein uL13 family. Part of the 50S ribosomal subunit.

Functionally, this protein is one of the early assembly proteins of the 50S ribosomal subunit, although it is not seen to bind rRNA by itself. It is important during the early stages of 50S assembly. This Coxiella burnetii (strain CbuK_Q154) (Coxiella burnetii (strain Q154)) protein is Large ribosomal subunit protein uL13.